Reading from the N-terminus, the 597-residue chain is Dictomallein-3 (597 aa).

The N-terminal stretch at 1–19 is a signal peptide; the sequence is MKLILILIFLFSCILFINC. Positions 148–409 constitute a Peptidase M66 domain; it reads PDVGQDYTLK…QNYFKNSIYY (262 aa). Residue His301 coordinates Zn(2+). Residue Glu302 is part of the active site. 2 residues coordinate Zn(2+): His305 and His311.

The protein belongs to the dictomallein family. The cofactor is Zn(2+).

Its subcellular location is the secreted. The sequence is that of Dictomallein-3 (dtmlC) from Dictyostelium discoideum (Social amoeba).